The chain runs to 372 residues: Dual-specificity RNA methyltransferase RlmN (372 aa).

The Proton acceptor role is filled by E93. Positions 99–338 (EKDRATLCIS…VTVRKTRGDD (240 aa)) constitute a Radical SAM core domain. C106 and C343 form a disulfide bridge. [4Fe-4S] cluster contacts are provided by C113, C117, and C120. S-adenosyl-L-methionine is bound by residues 167-168 (GE), S199, 221-223 (SLH), and N300. C343 functions as the S-methylcysteine intermediate in the catalytic mechanism.

This sequence belongs to the radical SAM superfamily. RlmN family. Requires [4Fe-4S] cluster as cofactor.

The protein resides in the cytoplasm. It carries out the reaction adenosine(2503) in 23S rRNA + 2 reduced [2Fe-2S]-[ferredoxin] + 2 S-adenosyl-L-methionine = 2-methyladenosine(2503) in 23S rRNA + 5'-deoxyadenosine + L-methionine + 2 oxidized [2Fe-2S]-[ferredoxin] + S-adenosyl-L-homocysteine. The enzyme catalyses adenosine(37) in tRNA + 2 reduced [2Fe-2S]-[ferredoxin] + 2 S-adenosyl-L-methionine = 2-methyladenosine(37) in tRNA + 5'-deoxyadenosine + L-methionine + 2 oxidized [2Fe-2S]-[ferredoxin] + S-adenosyl-L-homocysteine. Specifically methylates position 2 of adenine 2503 in 23S rRNA and position 2 of adenine 37 in tRNAs. m2A2503 modification seems to play a crucial role in the proofreading step occurring at the peptidyl transferase center and thus would serve to optimize ribosomal fidelity. The sequence is that of Dual-specificity RNA methyltransferase RlmN from Psychromonas ingrahamii (strain DSM 17664 / CCUG 51855 / 37).